The following is a 204-amino-acid chain: MIARLRGTLLEKRPPTLVVEANGLGYEVEAPLSTIEALPETGREVILHTHLSVREDGQTLFGFRTRAERDLFRRLIRVSGVGPKLGLALLSGVDGEELVRCVRDDDPKRLTQVPGIGRKTAERLIVELRDRLDGVGGGSTAAPAAGADHPTGENDPVSEAIEGLVALGYKPPEAARMARNAAEPELGCEAIIRRALQRAVPRGG.

Residues 1-64 (MIARLRGTLL…EDGQTLFGFR (64 aa)) form a domain I region. A domain II region spans residues 65–143 (TRAERDLFRR…GVGGGSTAAP (79 aa)). The tract at residues 144 to 153 (AAGADHPTGE) is flexible linker. A domain III region spans residues 153-204 (ENDPVSEAIEGLVALGYKPPEAARMARNAAEPELGCEAIIRRALQRAVPRGG).

This sequence belongs to the RuvA family. As to quaternary structure, homotetramer. Forms an RuvA(8)-RuvB(12)-Holliday junction (HJ) complex. HJ DNA is sandwiched between 2 RuvA tetramers; dsDNA enters through RuvA and exits via RuvB. An RuvB hexamer assembles on each DNA strand where it exits the tetramer. Each RuvB hexamer is contacted by two RuvA subunits (via domain III) on 2 adjacent RuvB subunits; this complex drives branch migration. In the full resolvosome a probable DNA-RuvA(4)-RuvB(12)-RuvC(2) complex forms which resolves the HJ.

It localises to the cytoplasm. Functionally, the RuvA-RuvB-RuvC complex processes Holliday junction (HJ) DNA during genetic recombination and DNA repair, while the RuvA-RuvB complex plays an important role in the rescue of blocked DNA replication forks via replication fork reversal (RFR). RuvA specifically binds to HJ cruciform DNA, conferring on it an open structure. The RuvB hexamer acts as an ATP-dependent pump, pulling dsDNA into and through the RuvAB complex. HJ branch migration allows RuvC to scan DNA until it finds its consensus sequence, where it cleaves and resolves the cruciform DNA. The polypeptide is Holliday junction branch migration complex subunit RuvA (Halorhodospira halophila (strain DSM 244 / SL1) (Ectothiorhodospira halophila (strain DSM 244 / SL1))).